We begin with the raw amino-acid sequence, 327 residues long: Acetaldehyde dehydrogenase 5 (327 aa).

15–18 (SGNI) contacts NAD(+). The active-site Acyl-thioester intermediate is the Cys-133. NAD(+)-binding positions include 164–172 (SAGPGTRAN) and Asn-297.

This sequence belongs to the acetaldehyde dehydrogenase family.

It carries out the reaction acetaldehyde + NAD(+) + CoA = acetyl-CoA + NADH + H(+). The protein is Acetaldehyde dehydrogenase 5 of Rhodococcus jostii (strain RHA1).